The chain runs to 448 residues: MRVSRYFGTDGIRGRVGQGLISADFVLRLGNALGRVLAQGRDTRPMVLIGKDTRISGYMFESALEAGLVAAGADVQLIGPMPTPAIAFLTNTLRADAGVVISASHNPHDDNGIKFFSAMGEKLDDATEAAIEAAIEAPFLTVDSEYLGKVKRTRDAIGRYIEFSKASVPRGFTLRGLKLVLDCAHGATYHIAPMLFRELGAELVTIGVDPDGLNINAGVGSTHLETLAATVRESGADLGIAFDGDGDRVLMTDAQGRTVDGDDLLYVLARAWRASGRLKGTVVGTLMSNYGLEQALGTLGIPFIRARVGDRYVHQALVESGGVLGGEASGHLLCLDRATTGDGIVSALQVLEVLRHEGLTLSQALLGLHKVPQKTVNVCWSGPARAAVEMPEVRQALVEAQAAVQGRGRVFLRPSGTEPVVRITVEADDVVLMQQTLDRLADVVRDAA.

The Phosphoserine intermediate role is filled by S104. Residues S104, D243, D245, and D247 each contribute to the Mg(2+) site. Position 104 is a phosphoserine (S104).

This sequence belongs to the phosphohexose mutase family. The cofactor is Mg(2+). Post-translationally, activated by phosphorylation.

The catalysed reaction is alpha-D-glucosamine 1-phosphate = D-glucosamine 6-phosphate. Functionally, catalyzes the conversion of glucosamine-6-phosphate to glucosamine-1-phosphate. This Xylella fastidiosa (strain Temecula1 / ATCC 700964) protein is Phosphoglucosamine mutase.